We begin with the raw amino-acid sequence, 252 residues long: Adenosylcobinamide-GDP ribazoletransferase (252 aa).

The next 7 helical transmembrane spans lie at 4–24, 38–58, 60–80, 113–133, 141–161, 190–210, and 232–252; these read LFKG…PYVE, PIIG…INYL, ISIV…TGML, FSVI…HSFL, ILMF…ITII, LVCI…LLIV, and VAGF…CLFT.

It belongs to the CobS family. It depends on Mg(2+) as a cofactor.

The protein resides in the cell membrane. The catalysed reaction is alpha-ribazole + adenosylcob(III)inamide-GDP = adenosylcob(III)alamin + GMP + H(+). The enzyme catalyses alpha-ribazole 5'-phosphate + adenosylcob(III)inamide-GDP = adenosylcob(III)alamin 5'-phosphate + GMP + H(+). It participates in cofactor biosynthesis; adenosylcobalamin biosynthesis; adenosylcobalamin from cob(II)yrinate a,c-diamide: step 7/7. Joins adenosylcobinamide-GDP and alpha-ribazole to generate adenosylcobalamin (Ado-cobalamin). Also synthesizes adenosylcobalamin 5'-phosphate from adenosylcobinamide-GDP and alpha-ribazole 5'-phosphate. The protein is Adenosylcobinamide-GDP ribazoletransferase of Clostridium botulinum (strain Alaska E43 / Type E3).